The following is a 321-amino-acid chain: Ribosomal large subunit pseudouridine synthase D (321 aa).

The 78-residue stretch at 16-93 folds into the S4 RNA-binding domain; it reads YRLDYILSKL…IPLNIIYEDN (78 aa). Residue aspartate 142 is part of the active site.

It belongs to the pseudouridine synthase RluA family.

It is found in the cytoplasm. The enzyme catalyses uridine(1911/1915/1917) in 23S rRNA = pseudouridine(1911/1915/1917) in 23S rRNA. Functionally, responsible for synthesis of pseudouridine from uracil at positions 1911, 1915 and 1917 in 23S ribosomal RNA. This is Ribosomal large subunit pseudouridine synthase D (rluD) from Blochmanniella floridana.